Here is a 253-residue protein sequence, read N- to C-terminus: Glutamate racemase (253 aa).

Residues 7–8 (DS) and 39–40 (YG) each bind substrate. Catalysis depends on Cys70, which acts as the Proton donor/acceptor. 71-72 (NS) serves as a coordination point for substrate. Cys179 (proton donor/acceptor) is an active-site residue. Substrate is bound at residue 180–181 (TH).

This sequence belongs to the aspartate/glutamate racemases family.

The catalysed reaction is L-glutamate = D-glutamate. Its pathway is cell wall biogenesis; peptidoglycan biosynthesis. Its function is as follows. Provides the (R)-glutamate required for cell wall biosynthesis. This Nitratiruptor sp. (strain SB155-2) protein is Glutamate racemase.